Here is an 884-residue protein sequence, read N- to C-terminus: Protein translocase subunit SecA (884 aa).

ATP is bound by residues Q82, 100–104, and D491; that span reads GEGKT.

The protein belongs to the SecA family.

The protein resides in the plastid. The protein localises to the chloroplast stroma. It localises to the chloroplast thylakoid membrane. The catalysed reaction is ATP + H2O + cellular proteinSide 1 = ADP + phosphate + cellular proteinSide 2.. Functionally, has a central role in coupling the hydrolysis of ATP to the transfer of proteins across the thylakoid membrane. The sequence is that of Protein translocase subunit SecA from Olisthodiscus luteus (Marine phytoflagellate).